The primary structure comprises 499 residues: UDP-N-acetylmuramoylalanine--D-glutamate ligase (499 aa).

An ATP-binding site is contributed by 120-126; that stretch reads GTNGKTT.

The protein belongs to the MurCDEF family.

Its subcellular location is the cytoplasm. The catalysed reaction is UDP-N-acetyl-alpha-D-muramoyl-L-alanine + D-glutamate + ATP = UDP-N-acetyl-alpha-D-muramoyl-L-alanyl-D-glutamate + ADP + phosphate + H(+). It participates in cell wall biogenesis; peptidoglycan biosynthesis. Functionally, cell wall formation. Catalyzes the addition of glutamate to the nucleotide precursor UDP-N-acetylmuramoyl-L-alanine (UMA). This chain is UDP-N-acetylmuramoylalanine--D-glutamate ligase, found in Nostoc punctiforme (strain ATCC 29133 / PCC 73102).